The sequence spans 843 residues: Alpha-L-fucosidase 2 (843 aa).

The N-terminal stretch at 1–27 (MAEKSSFFVHFSCLLLLLTIIITCGEG) is a signal peptide. Residues Asn-62, Asn-253, Asn-365, and Asn-605 are each glycosylated (N-linked (GlcNAc...) asparagine).

It belongs to the glycosyl hydrolase 95 family. As to expression, ubiquitous. Highest expression in vascular tissues, leaf trichomes, root elongation zone and emerging lateral roots.

The protein resides in the secreted. It localises to the extracellular space. The protein localises to the apoplast. It carries out the reaction an alpha-L-fucoside + H2O = L-fucose + an alcohol. In terms of biological role, hydrolyzes alpha-1,2-linked fucose. Also active on fucosylated xyloglucan oligosaccharides. No activity with 3-fucosyllactose, p-nitrophenyl-alpha-I-fucopyranoside, lacto-N-fucopentaose II, lacto-N-fucopentaose III or alpha 1,6-fucosylated chitopentaose. Involved in apoplastic xyloglucan metabolism. This chain is Alpha-L-fucosidase 2 (FUC95A), found in Arabidopsis thaliana (Mouse-ear cress).